A 199-amino-acid chain; its full sequence is Thymidine kinase (199 aa).

Residues 15–22 (GSMFSGKS) and 88–91 (DEVQ) contribute to the ATP site. The active-site Proton acceptor is the Glu89. Zn(2+) is bound by residues Cys145, Cys148, Cys183, and His186.

This sequence belongs to the thymidine kinase family. In terms of assembly, homotetramer.

The protein localises to the cytoplasm. The enzyme catalyses thymidine + ATP = dTMP + ADP + H(+). The sequence is that of Thymidine kinase from Staphylococcus epidermidis (strain ATCC 12228 / FDA PCI 1200).